A 276-amino-acid polypeptide reads, in one-letter code: Ribosomal RNA small subunit methyltransferase A (276 aa).

Positions 27, 29, 54, 75, 101, and 122 each coordinate S-adenosyl-L-methionine.

It belongs to the class I-like SAM-binding methyltransferase superfamily. rRNA adenine N(6)-methyltransferase family. RsmA subfamily.

The protein localises to the cytoplasm. The catalysed reaction is adenosine(1518)/adenosine(1519) in 16S rRNA + 4 S-adenosyl-L-methionine = N(6)-dimethyladenosine(1518)/N(6)-dimethyladenosine(1519) in 16S rRNA + 4 S-adenosyl-L-homocysteine + 4 H(+). Its function is as follows. Specifically dimethylates two adjacent adenosines (A1518 and A1519) in the loop of a conserved hairpin near the 3'-end of 16S rRNA in the 30S particle. May play a critical role in biogenesis of 30S subunits. The polypeptide is Ribosomal RNA small subunit methyltransferase A (Brucella abortus biovar 1 (strain 9-941)).